We begin with the raw amino-acid sequence, 297 residues long: Mycothiol acetyltransferase (297 aa).

N-acetyltransferase domains lie at Asp-8–Pro-153 and Val-156–Leu-297. Glu-36 lines the 1D-myo-inositol 2-(L-cysteinylamino)-2-deoxy-alpha-D-glucopyranoside pocket. Residue Leu-80–Val-82 coordinates acetyl-CoA. 1D-myo-inositol 2-(L-cysteinylamino)-2-deoxy-alpha-D-glucopyranoside contacts are provided by Glu-183, Lys-223, and Glu-231. Residues Val-235–Val-237 and Gln-242–Lys-248 contribute to the acetyl-CoA site. 1D-myo-inositol 2-(L-cysteinylamino)-2-deoxy-alpha-D-glucopyranoside is bound at residue Tyr-269. Acetyl-CoA is bound at residue Asn-274 to Arg-279.

Belongs to the acetyltransferase family. MshD subfamily. Monomer.

It carries out the reaction 1D-myo-inositol 2-(L-cysteinylamino)-2-deoxy-alpha-D-glucopyranoside + acetyl-CoA = mycothiol + CoA + H(+). In terms of biological role, catalyzes the transfer of acetyl from acetyl-CoA to desacetylmycothiol (Cys-GlcN-Ins) to form mycothiol. The polypeptide is Mycothiol acetyltransferase (Actinosynnema mirum (strain ATCC 29888 / DSM 43827 / JCM 3225 / NBRC 14064 / NCIMB 13271 / NRRL B-12336 / IMRU 3971 / 101)).